We begin with the raw amino-acid sequence, 2170 residues long: ATP-binding cassette sub-family A member 7 (2170 aa).

Residues P22–V42 traverse the membrane as a helical segment. Residues R43–S547 lie on the Extracellular side of the membrane. C75 and C222 are joined by a disulfide. A glycan (N-linked (GlcNAc...) asparagine) is linked at N309. The next 6 helical transmembrane spans lie at L548 to V568, L591 to V611, V624 to L644, L653 to V673, L679 to C699, and A733 to C753. The ABC transporter 1 domain maps to V805–V1036. ATP is bound at residue G839–T846. A helical membrane pass occupies residues T847 to G867. Residues T1044–D1086 are disordered. A compositionally biased stretch (basic and acidic residues) spans H1045–T1066. Residues I1257 to F1277 form a helical membrane-spanning segment. Residues G1278–L1562 are Extracellular-facing. Cysteines 1370 and 1384 form a disulfide. A run of 6 helical transmembrane segments spans residues V1563–I1583, F1609–A1629, L1646–F1666, V1674–L1694, I1708–M1728, and I1754–L1774. The 233-residue stretch at L1818–R2050 folds into the ABC transporter 2 domain. G1852–T1859 serves as a coordination point for ATP. Residues Q2129–I2170 form a disordered region.

It belongs to the ABC transporter superfamily. ABCA family. Post-translationally, N-glycosylated. As to expression, expressed in blood cells. Also detected in brain and ovary tissues (at protein level). Expressed in platelet.

The protein resides in the cell membrane. The protein localises to the golgi apparatus membrane. It is found in the early endosome membrane. It localises to the cell projection. Its subcellular location is the ruffle membrane. The protein resides in the phagocytic cup. The protein localises to the cytoplasm. In terms of biological role, ATP-binding cassette (ABC) transporter that plays a role in lipid homeostasis and macrophage-mediated phagocytosis. Binds APOA1 and may function in apolipoprotein-mediated phospholipid efflux from cells. May also mediate cholesterol efflux. May regulate cellular ceramide homeostasis during keratinocyte differentiation. Involved in lipid raft organization and CD1D localization on thymocytes and antigen-presenting cells, which plays an important role in natural killer T-cell development and activation. Plays a role in phagocytosis of apoptotic cells by macrophages. Macrophage phagocytosis is stimulated by APOA1 or APOA2, probably by stabilization of ABCA7. Also involved in phagocytic clearance of amyloid-beta by microglia cells and macrophages. Further limits amyloid-beta production by playing a role in the regulation of amyloid-beta A4 precursor protein (APP) endocytosis and/or processing. This is ATP-binding cassette sub-family A member 7 (Abca7) from Rattus norvegicus (Rat).